The sequence spans 488 residues: UDP-N-acetylmuramoyl-L-alanyl-D-glutamate--2,6-diaminopimelate ligase (488 aa).

Residues leucine 24, serine 26, and 41-43 (HQV) each bind UDP-N-acetyl-alpha-D-muramoyl-L-alanyl-D-glutamate. 113 to 119 (GTNGKTT) lines the ATP pocket. UDP-N-acetyl-alpha-D-muramoyl-L-alanyl-D-glutamate contacts are provided by residues asparagine 154, 155 to 156 (TT), serine 182, glutamine 188, and arginine 190. The residue at position 222 (lysine 222) is an N6-carboxylysine. Meso-2,6-diaminopimelate is bound by residues arginine 386, 410-413 (DNPR), glycine 461, and glutamate 465. A Meso-diaminopimelate recognition motif motif is present at residues 410 to 413 (DNPR).

It belongs to the MurCDEF family. MurE subfamily. The cofactor is Mg(2+). Post-translationally, carboxylation is probably crucial for Mg(2+) binding and, consequently, for the gamma-phosphate positioning of ATP.

It localises to the cytoplasm. It catalyses the reaction UDP-N-acetyl-alpha-D-muramoyl-L-alanyl-D-glutamate + meso-2,6-diaminopimelate + ATP = UDP-N-acetyl-alpha-D-muramoyl-L-alanyl-gamma-D-glutamyl-meso-2,6-diaminopimelate + ADP + phosphate + H(+). Its pathway is cell wall biogenesis; peptidoglycan biosynthesis. Functionally, catalyzes the addition of meso-diaminopimelic acid to the nucleotide precursor UDP-N-acetylmuramoyl-L-alanyl-D-glutamate (UMAG) in the biosynthesis of bacterial cell-wall peptidoglycan. The protein is UDP-N-acetylmuramoyl-L-alanyl-D-glutamate--2,6-diaminopimelate ligase of Haemophilus influenzae (strain PittEE).